A 171-amino-acid chain; its full sequence is MVPLFGLFCIFSQLYSLCSAYVDITSGYQVFFNLPTNMTNNQICWLFQASYYDIYSDKSGRTLRTGRFEPGDQQSLIYRDTLVELEAITDSYEYSNLDLSTYNGPEPYNSETDYCTDIMDLVMRVYDEEGHYVHPVANNSTNACAHPTPPTLNNLLISNYSDGRNYKESSI.

The signal sequence occupies residues M1–A20. Residues N37, N139, and N159 are each glycosylated (N-linked (GlcNAc...) asparagine).

It localises to the cytoplasm. The protein localises to the secreted. This is Secreted protein CSS3 from Saccharomyces cerevisiae (strain ATCC 204508 / S288c) (Baker's yeast).